We begin with the raw amino-acid sequence, 479 residues long: MAWNTNLRWRLPLTCLLLQVVMVILFGVFVRYDFEADAHWWSERTHKNLSDVENEFYYRYPSFQDVHVMVFVGFGFLMTFLQRYGFSAVGFNFLLAAFGIQWALLMQGWFHFLQGRYIVVGVENLINADFCVASVCVAFGAVLGKVSPIQLLIMTFFQVTLFAVNEFILLNLLKVKDAGGSMTIHTFGAYFGLTVTRILYRRNLEQSKERQNSVYQSDLFAMIGTLFLWMYWPSFNSAISYHGDSQHRAAINTYCSLAACVLTSVAISSALHKKGKLDMVHIQNATLAGGVAVGTAAEMMLMPYGALIIGFVCGIISTLGFVYLTPFLESRLHIQDTCGINNLHGIPGIIGGIVGAVTAASASLEVYGKEGLVHSFDFQGFKGDWTARTQGKFQIYGLLVTLAMALMGGIIVGLILRLPFWGQPSDENCFEDAVYWEMPEGNSTVYIPEDPTFKPSGPSVPSVPMVSPLPMASSVPLVP.

Residues 1-9 (MAWNTNLRW) lie on the Cytoplasmic side of the membrane. Residues 10 to 30 (RLPLTCLLLQVVMVILFGVFV) traverse the membrane as a helical segment. The Extracellular portion of the chain corresponds to 31–60 (RYDFEADAHWWSERTHKNLSDVENEFYYRY). N-linked (GlcNAc...) asparagine glycosylation occurs at Asn48. Residues 61 to 81 (PSFQDVHVMVFVGFGFLMTFL) traverse the membrane as a helical segment. The Cytoplasmic portion of the chain corresponds to 82-85 (QRYG). Residues 86 to 106 (FSAVGFNFLLAAFGIQWALLM) form a helical membrane-spanning segment. Residues 107-123 (QGWFHFLQGRYIVVGVE) lie on the Extracellular side of the membrane. A helical transmembrane segment spans residues 124–144 (NLINADFCVASVCVAFGAVLG). Residues 145 to 148 (KVSP) lie on the Cytoplasmic side of the membrane. Residues 149-169 (IQLLIMTFFQVTLFAVNEFIL) form a helical membrane-spanning segment. The Extracellular portion of the chain corresponds to 170–177 (LNLLKVKD). The chain crosses the membrane as a helical span at residues 178–200 (AGGSMTIHTFGAYFGLTVTRILY). Residues 201–218 (RRNLEQSKERQNSVYQSD) are Cytoplasmic-facing. A helical transmembrane segment spans residues 219-239 (LFAMIGTLFLWMYWPSFNSAI). Residues 240–250 (SYHGDSQHRAA) lie on the Extracellular side of the membrane. Residues 251-271 (INTYCSLAACVLTSVAISSAL) form a helical membrane-spanning segment. The Cytoplasmic portion of the chain corresponds to 272–281 (HKKGKLDMVH). The helical transmembrane segment at 282-302 (IQNATLAGGVAVGTAAEMMLM) threads the bilayer. Position 303 (Pro303) is a topological domain, extracellular. A helical membrane pass occupies residues 304-324 (YGALIIGFVCGIISTLGFVYL). The Cytoplasmic portion of the chain corresponds to 325-345 (TPFLESRLHIQDTCGINNLHG). The chain crosses the membrane as a helical span at residues 346–366 (IPGIIGGIVGAVTAASASLEV). The Extracellular portion of the chain corresponds to 367 to 394 (YGKEGLVHSFDFQGFKGDWTARTQGKFQ). The helical transmembrane segment at 395–415 (IYGLLVTLAMALMGGIIVGLI) threads the bilayer. The Cytoplasmic segment spans residues 416–479 (LRLPFWGQPS…PMASSVPLVP (64 aa)).

The protein belongs to the ammonium transporter (TC 2.A.49) family. Rh subfamily. Homotrimer. In terms of processing, N-glycosylated.

It is found in the cell membrane. The protein resides in the apical cell membrane. It catalyses the reaction NH4(+)(in) = NH4(+)(out). The enzyme catalyses methylamine(out) = methylamine(in). It carries out the reaction CO2(out) = CO2(in). In terms of biological role, ammonium transporter involved in the maintenance of acid-base homeostasis. Transports ammonium and its related derivative methylammonium across the plasma membrane of epithelial cells likely contributing to renal transepithelial ammonia transport and ammonia metabolism. Postulated to primarily mediate an electroneutral bidirectional transport of NH3 ammonia species according to a mechanism that implies interaction of an NH4(+) ion with acidic residues of the pore entry followed by dissociation of NH4(+) into NH3 and H(+). As a result NH3 transits through the central pore and is protonated on the extracellular side reforming NH4(+). May act as a CO2 channel providing for renal acid secretion. The protein is Ammonium transporter Rh type C (RHCG) of Pan troglodytes (Chimpanzee).